The primary structure comprises 159 residues: Cytochrome c-type biogenesis protein CcmE (159 aa).

At 1–8 the chain is on the cytoplasmic side; the sequence is MHPIRKKR. The helical; Signal-anchor for type II membrane protein transmembrane segment at 9–29 threads the bilayer; it reads LTIVLFLVAGIAIAVGLTTYA. Residues 30–159 lie on the Periplasmic side of the membrane; sequence LRQNINLFYD…VEKAAETTAY (130 aa). Residues His-124 and Tyr-128 each contribute to the heme site. The segment at 135–159 is disordered; that stretch reads EALERSSKGQHKSADVEKAAETTAY. The span at 136–159 shows a compositional bias: basic and acidic residues; sequence ALERSSKGQHKSADVEKAAETTAY.

It belongs to the CcmE/CycJ family.

It localises to the cell inner membrane. Functionally, heme chaperone required for the biogenesis of c-type cytochromes. Transiently binds heme delivered by CcmC and transfers the heme to apo-cytochromes in a process facilitated by CcmF and CcmH. This is Cytochrome c-type biogenesis protein CcmE from Marinobacter nauticus (strain ATCC 700491 / DSM 11845 / VT8) (Marinobacter aquaeolei).